We begin with the raw amino-acid sequence, 152 residues long: Arginine repressor (152 aa).

This sequence belongs to the ArgR family.

It is found in the cytoplasm. It participates in amino-acid biosynthesis; L-arginine biosynthesis [regulation]. In terms of biological role, regulates arginine biosynthesis genes. This chain is Arginine repressor, found in Lactococcus lactis subsp. cremoris (strain MG1363).